The primary structure comprises 174 residues: Small ribosomal subunit protein uS5 (174 aa).

An S5 DRBM domain is found at 19–82 (LREKMVAINR…DEARRKMVKV (64 aa)).

The protein belongs to the universal ribosomal protein uS5 family. As to quaternary structure, part of the 30S ribosomal subunit. Contacts proteins S4 and S8.

With S4 and S12 plays an important role in translational accuracy. Its function is as follows. Located at the back of the 30S subunit body where it stabilizes the conformation of the head with respect to the body. This Azoarcus sp. (strain BH72) protein is Small ribosomal subunit protein uS5.